Consider the following 61-residue polypeptide: Small ribosomal subunit protein uS14 (61 aa).

Zn(2+)-binding residues include C24, C27, C40, and C43.

It belongs to the universal ribosomal protein uS14 family. Zinc-binding uS14 subfamily. In terms of assembly, part of the 30S ribosomal subunit. Contacts proteins S3 and S10. Requires Zn(2+) as cofactor.

Functionally, binds 16S rRNA, required for the assembly of 30S particles and may also be responsible for determining the conformation of the 16S rRNA at the A site. In Mycoplasma capricolum subsp. capricolum (strain California kid / ATCC 27343 / NCTC 10154), this protein is Small ribosomal subunit protein uS14.